A 642-amino-acid chain; its full sequence is Threonine--tRNA ligase (642 aa).

The TGS domain maps to Met-1 to Thr-61. The catalytic stretch occupies residues Asp-243–Pro-534. 3 residues coordinate Zn(2+): Cys-334, His-385, and His-511.

This sequence belongs to the class-II aminoacyl-tRNA synthetase family. In terms of assembly, homodimer. The cofactor is Zn(2+).

It is found in the cytoplasm. It carries out the reaction tRNA(Thr) + L-threonine + ATP = L-threonyl-tRNA(Thr) + AMP + diphosphate + H(+). Its function is as follows. Catalyzes the attachment of threonine to tRNA(Thr) in a two-step reaction: L-threonine is first activated by ATP to form Thr-AMP and then transferred to the acceptor end of tRNA(Thr). Also edits incorrectly charged L-seryl-tRNA(Thr). The sequence is that of Threonine--tRNA ligase from Shewanella oneidensis (strain ATCC 700550 / JCM 31522 / CIP 106686 / LMG 19005 / NCIMB 14063 / MR-1).